An 86-amino-acid polypeptide reads, in one-letter code: UPF0437 protein Ava_4254 (86 aa).

It belongs to the UPF0437 family.

This Trichormus variabilis (strain ATCC 29413 / PCC 7937) (Anabaena variabilis) protein is UPF0437 protein Ava_4254.